Reading from the N-terminus, the 29-residue chain is Cytochrome b6-f complex subunit 8 (29 aa).

A helical transmembrane segment spans residues isoleucine 3–valine 23.

It belongs to the PetN family. The 4 large subunits of the cytochrome b6-f complex are cytochrome b6, subunit IV (17 kDa polypeptide, PetD), cytochrome f and the Rieske protein, while the 4 small subunits are PetG, PetL, PetM and PetN. The complex functions as a dimer.

The protein localises to the plastid. It localises to the chloroplast thylakoid membrane. Component of the cytochrome b6-f complex, which mediates electron transfer between photosystem II (PSII) and photosystem I (PSI), cyclic electron flow around PSI, and state transitions. The polypeptide is Cytochrome b6-f complex subunit 8 (Coffea arabica (Arabian coffee)).